Here is a 327-residue protein sequence, read N- to C-terminus: Malate dehydrogenase (327 aa).

Residue 12 to 18 (GAAGQIG) participates in NAD(+) binding. 2 residues coordinate substrate: arginine 93 and arginine 99. Residues asparagine 106, glutamine 113, and 130-132 (VGN) each bind NAD(+). Substrate-binding residues include asparagine 132 and arginine 163. The Proton acceptor role is filled by histidine 188.

It belongs to the LDH/MDH superfamily. MDH type 2 family.

It catalyses the reaction (S)-malate + NAD(+) = oxaloacetate + NADH + H(+). Functionally, catalyzes the reversible oxidation of malate to oxaloacetate. This is Malate dehydrogenase from Cupriavidus pinatubonensis (strain JMP 134 / LMG 1197) (Cupriavidus necator (strain JMP 134)).